The chain runs to 118 residues: HTH-type transcriptional regulator SarT (118 aa).

The segment at residues 55–78 (MRDIISYIGIDQSRIVKSVKDLSK) is a DNA-binding region (H-T-H motif).

This sequence belongs to the SarA family.

Its subcellular location is the cytoplasm. Functionally, transcriptional regulator acting as an intermediary between major regulators sarA and agr and virulence genes. Represses alpha-hemolysin (hla) gene expression. Down-regulates agr RNAIII expression by repressing sarU, a positive activator of agr expression. Up-regulates sarS, which induces the expression of the cell wall-associated protein A (spa). The polypeptide is HTH-type transcriptional regulator SarT (sarT) (Staphylococcus aureus (strain NCTC 8325 / PS 47)).